A 623-amino-acid polypeptide reads, in one-letter code: Phosphatidylinositol-3-phosphatase SAC1 (623 aa).

Topologically, residues 1–523 (MTGPIVYVQN…SPFPDRRPVY (523 aa)) are cytoplasmic. In terms of domain architecture, SAC spans 115–454 (LELHLKNSTF…ADAVSVAYSG (340 aa)). Residues Lys-246 and Lys-358 each participate in a glycyl lysine isopeptide (Lys-Gly) (interchain with G-Cter in ubiquitin) cross-link. Residues 524-544 (IQLIPMIICAALTVLGATIFF) form a helical membrane-spanning segment. The Lumenal segment spans residues 545 to 552 (PKDRFTSS). Residues 553–573 (KNLLYFAGASIVLALSTKFMF) traverse the membrane as a helical segment. At 574–623 (KNGIQFVNWPKLVDVGFLVVHQTHDKEQQFKGLKYAQSPKFSKPDPLKRD) the chain is on the cytoplasmic side.

In terms of assembly, component of the SPOTS complex, at least composed of LCB1/2 (LCB1 and/or LCB2), ORM1/2 (ORM1 and/or ORM2), SAC1 and TSC3.

Its subcellular location is the endoplasmic reticulum membrane. The protein localises to the golgi apparatus membrane. The enzyme catalyses a 1,2-diacyl-sn-glycero-3-phospho-(1D-myo-inositol-3-phosphate) + H2O = a 1,2-diacyl-sn-glycero-3-phospho-(1D-myo-inositol) + phosphate. It carries out the reaction a 1,2-diacyl-sn-glycero-3-phospho-(1D-myo-inositol 4-phosphate) + H2O = a 1,2-diacyl-sn-glycero-3-phospho-(1D-myo-inositol) + phosphate. Functionally, phosphoinositide phosphatase which catalyzes the hydrolysis of phosphatidylinositol 3-phosphate (PtdIns(3)P) and phosphatidylinositol 4-phosphate (PtdIns(4)P). Has low activity towards phosphatidylinositol-3,5-bisphosphate (PtdIns(3,5)P2). May be involved in the coordination of the activities of the secretory pathway and the actin cytoskeleton. The polypeptide is Phosphatidylinositol-3-phosphatase SAC1 (SAC1) (Saccharomyces cerevisiae (strain ATCC 204508 / S288c) (Baker's yeast)).